Here is a 171-residue protein sequence, read N- to C-terminus: RxLR effector protein CRE7 (171 aa).

Positions 1–23 (MRAIAILLAVVATIFASLHGVSA) are cleaved as a signal peptide. The short motif at 46 to 59 (RRLRQTGDASDEER) is the RxLR-dEER element.

This sequence belongs to the RxLR effector family.

The protein resides in the secreted. Its subcellular location is the host cell. Effector that is involved in host plant infection. Contributes to virulence during the early infection stage, by inhibiting plant defense responses induced by both PAMP-triggered immunity (PTI) and effector-triggered immunity (ETI). This chain is RxLR effector protein CRE7, found in Phytophthora infestans (strain T30-4) (Potato late blight agent).